The following is a 164-amino-acid chain: MTTAFYPGSFDPITNGHVDVLVQALNVAEKVIVAIGIHPGKAPLFSFEERAELIRLSLAEVLPGKTGDIDVVAFDNLVVDAARSHGATLLIRGLRDGTDLDYEMQMAGMNRTMAPDIQTIFLPAGTASRPITATLVRQIAAMGGDVSAFVPAAVLQALTSKRPD.

Ser9 is a binding site for substrate. ATP is bound by residues 9–10 (SF) and His17. Residues Lys41, Val78, and Arg92 each coordinate substrate. Residues 93 to 95 (GLR), Glu103, and 128 to 134 (SRPITAT) each bind ATP.

The protein belongs to the bacterial CoaD family. As to quaternary structure, homohexamer. The cofactor is Mg(2+).

It localises to the cytoplasm. The enzyme catalyses (R)-4'-phosphopantetheine + ATP + H(+) = 3'-dephospho-CoA + diphosphate. Its pathway is cofactor biosynthesis; coenzyme A biosynthesis; CoA from (R)-pantothenate: step 4/5. Reversibly transfers an adenylyl group from ATP to 4'-phosphopantetheine, yielding dephospho-CoA (dPCoA) and pyrophosphate. This Rhizobium leguminosarum bv. trifolii (strain WSM2304) protein is Phosphopantetheine adenylyltransferase.